A 174-amino-acid polypeptide reads, in one-letter code: UPF0200 protein PAE1629 (174 aa).

9 to 16 (GLPGSGKT) is an ATP binding site.

It belongs to the UPF0200 family.

This is UPF0200 protein PAE1629 from Pyrobaculum aerophilum (strain ATCC 51768 / DSM 7523 / JCM 9630 / CIP 104966 / NBRC 100827 / IM2).